The chain runs to 508 residues: MAIENNNNGVNFCTVKRPKTKIVCTLGPASRSVPMIEKLLRAGMNVARFNFSHGSHDYHQETIDNLRQAMESTGILCAVMLDTKGPEIRTGFLKDAKPVQLKQGQEITISTDYSIKGDESMICMSYKKLAEDVKPQSVILCADGQITFTVLSCDKENGLDRCRCENTAVLGERKNVNLPGVIVDLPTLTDKDKDDILNWGVPNHIDMIALSFVRKGSDLVEVRKLLGEHAKNILLMSKVENQEGVANFDDILLNSDAFMVARGDLGMEIPIEKIFLAQKVMIYKCNIQGKPVVTATQMLESMIKSPRPTRAEATDVANAVLDGTDCVMLSGETAAGAYPDLAVGTMAKICIEAESTIDYPDVFKRIMSNAPVPMSPLESLASSAVRTANSAKAALILVLTRGGSTAKLVAKYRPGMPILSVVVPEIKTDSFDWTCSDESPARHSLIFRGLVPVLHAGSARASHEESTEEALDFALQHAKTKGLCKQGDSVVALHRVGTASVIKIVTVK.

R48 contacts substrate. K(+)-binding residues include N50, S52, D82, and T83. 50-53 is an ATP binding site; sequence NFSH. ATP contacts are provided by R89 and K174. E240 lines the Mg(2+) pocket. Residues G263, D264, and T296 each coordinate substrate. D264 contacts Mg(2+).

Belongs to the pyruvate kinase family. In terms of assembly, homotetramer. Mg(2+) is required as a cofactor. The cofactor is K(+).

The protein resides in the cytoplasm. It catalyses the reaction pyruvate + ATP = phosphoenolpyruvate + ADP + H(+). It participates in carbohydrate degradation; glycolysis; pyruvate from D-glyceraldehyde 3-phosphate: step 5/5. The chain is Pyruvate kinase, cytosolic isozyme from Nicotiana tabacum (Common tobacco).